The sequence spans 798 residues: MEQRWGLLRKVQQWSPRPSQTIYRRVEGPQLENLEEEDREEGEELPAQFCPMELKGPERLGSCPGRSIPIPWAAAGRKAAPYLVLTTLLIFTGAFLLGYVAFRGSCQACGDSVLVVGEDVNSEDSSRGTLYWSDLQDMFLRFLGEGRMEDTIRLTSLRERVAGSARMATLVQDILDKLSRQKLDHVWTDTHYVGLQFPDPAHPNTLHWVGADGSVQEQLPLEDPEVYCPYSATGNATGKLVYAHYGRREDLQDLKAKDVELAGSLLLVRAGITSFAQKVAIAQDFGAHGVLIYPDPADFSQDPHKPGLSSDRAVYGHVHLGTGDPYTPGFPSFNQTQFPPVESSGLPNIPAQPISADVADRLLRKLTGPVAPQEWKGRLSDSPYRLGPGPGLRLVVNNHRTSTPISNIFACIEGFAEPDHYVVIGAQRDAWGPGAAKSAVGTAILLELVRTFSSMVSSGFRPRRSLLFISWDGGDFGSVGATEWLEGYLSVLHLKAVVYVSLDNSVLGDGKFHAKTSPLLVSLIENILKQVDSPNHSGQTLYDQVAFTHPSWDAEVIQPLPMDSSAYSFTAFAGVPAVEFSFMEDDRVYPFLHTKEDTYENLHKMLRGRLPAVVLAVAQLAGQLLIRLSHDHLLPLDFGRYGDVVLRHIGNLNEFSGDLKARGLTLQWVYSARGDYIRAAEKLRKEIYSSEQSDERLMRMYNVRIMRVEFYFLSQYVSPADSPFRHIFLGQGDHTLGALVEHLRMLRSDGSGAASSGLSPGLGFQESRFRRQLALLTWTLQGAANALSGDVWNIDNNF.

Topologically, residues 1–81 are cytoplasmic; that stretch reads MEQRWGLLRK…WAAAGRKAAP (81 aa). The short motif at 23–26 is the Endocytosis signal element; it reads YRRV. The disordered stretch occupies residues 25–44; it reads RVEGPQLENLEEEDREEGEE. Acidic residues predominate over residues 33–44; the sequence is NLEEEDREEGEE. The chain crosses the membrane as a helical; Signal-anchor for type II membrane protein span at residues 82–102; that stretch reads YLVLTTLLIFTGAFLLGYVAF. The Extracellular portion of the chain corresponds to 103-798; sequence RGSCQACGDS…GDVWNIDNNF (696 aa). Residues Asn-235, Asn-334, and Asn-535 are each glycosylated (N-linked (GlcNAc...) asparagine).

Belongs to the peptidase M28 family. M28B subfamily. Homodimer.

It localises to the cell membrane. In terms of biological role, mediates cellular uptake of transferrin-bound iron in a non-iron dependent manner. May be involved in iron metabolism, hepatocyte function and erythrocyte differentiation. This chain is Transferrin receptor protein 2 (Tfr2), found in Rattus norvegicus (Rat).